Here is a 454-residue protein sequence, read N- to C-terminus: Carbon catabolite repressor protein 4 homolog 5 (454 aa).

Residues 1 to 76 are disordered; it reads MSGYERKNTT…SLRRRRRTKE (76 aa). Over residues 31–41 the composition is skewed to basic and acidic residues; the sequence is VYEKSNRKESI. The segment covering 61–75 has biased composition (basic residues); it reads VRHSKSSLRRRRRTK. Glu153 provides a ligand contact to Mg(2+).

Belongs to the CCR4/nocturin family. As to quaternary structure, component of the CCR4-NOT complex, at least composed of CRR4 and CAF1 proteins. Requires Mg(2+) as cofactor.

The protein localises to the nucleus. It is found in the cytoplasm. The enzyme catalyses Exonucleolytic cleavage of poly(A) to 5'-AMP.. Acts as a catalytic component of the CCR4-NOT core complex, which in the nucleus seems to be a general transcription factor, and in the cytoplasm the major mRNA deadenylase involved in mRNA turnover. The sequence is that of Carbon catabolite repressor protein 4 homolog 5 (CCR4-5) from Arabidopsis thaliana (Mouse-ear cress).